The sequence spans 276 residues: Putative translation initiation factor eIF-2B subunit 2-like (276 aa).

It belongs to the eIF-2B alpha/beta/delta subunits family. In terms of assembly, complex of two different subunits.

In terms of biological role, catalyzes the exchange of initiation factor 2-bound GDP for GTP. The chain is Putative translation initiation factor eIF-2B subunit 2-like from Pyrococcus furiosus (strain ATCC 43587 / DSM 3638 / JCM 8422 / Vc1).